Consider the following 106-residue polypeptide: Probable glutaredoxin (106 aa).

In terms of domain architecture, Glutaredoxin spans 8-106; sequence IVQKITGADP…AKYLDVQFTQ (99 aa). Cysteines 28 and 31 form a disulfide.

Belongs to the glutaredoxin family.

The protein localises to the virion. The chain is Probable glutaredoxin from Acanthamoeba polyphaga mimivirus (APMV).